The chain runs to 198 residues: Protein GrpE (198 aa).

It belongs to the GrpE family. Homodimer.

The protein resides in the cytoplasm. Its function is as follows. Participates actively in the response to hyperosmotic and heat shock by preventing the aggregation of stress-denatured proteins, in association with DnaK and GrpE. It is the nucleotide exchange factor for DnaK and may function as a thermosensor. Unfolded proteins bind initially to DnaJ; upon interaction with the DnaJ-bound protein, DnaK hydrolyzes its bound ATP, resulting in the formation of a stable complex. GrpE releases ADP from DnaK; ATP binding to DnaK triggers the release of the substrate protein, thus completing the reaction cycle. Several rounds of ATP-dependent interactions between DnaJ, DnaK and GrpE are required for fully efficient folding. This Actinobacillus pleuropneumoniae serotype 7 (strain AP76) protein is Protein GrpE.